The primary structure comprises 188 residues: Ribosome-recycling factor (188 aa).

It belongs to the RRF family.

Its subcellular location is the cytoplasm. Responsible for the release of ribosomes from messenger RNA at the termination of protein biosynthesis. May increase the efficiency of translation by recycling ribosomes from one round of translation to another. This is Ribosome-recycling factor from Bradyrhizobium diazoefficiens (strain JCM 10833 / BCRC 13528 / IAM 13628 / NBRC 14792 / USDA 110).